Here is a 158-residue protein sequence, read N- to C-terminus: Endoribonuclease YbeY (158 aa).

Positions 121, 125, and 131 each coordinate Zn(2+).

The protein belongs to the endoribonuclease YbeY family. The cofactor is Zn(2+).

The protein localises to the cytoplasm. Functionally, single strand-specific metallo-endoribonuclease involved in late-stage 70S ribosome quality control and in maturation of the 3' terminus of the 16S rRNA. This chain is Endoribonuclease YbeY, found in Exiguobacterium sibiricum (strain DSM 17290 / CCUG 55495 / CIP 109462 / JCM 13490 / 255-15).